We begin with the raw amino-acid sequence, 316 residues long: tRNA dimethylallyltransferase (316 aa).

Residue 17–24 coordinates ATP; sequence GPTASGKT. 19-24 contributes to the substrate binding site; it reads TASGKT. Interaction with substrate tRNA stretches follow at residues 42 to 45, 166 to 170, and 247 to 252; these read DSAL, QRLSR, and RCVGYR.

It belongs to the IPP transferase family. In terms of assembly, monomer. Mg(2+) is required as a cofactor.

It catalyses the reaction adenosine(37) in tRNA + dimethylallyl diphosphate = N(6)-dimethylallyladenosine(37) in tRNA + diphosphate. Functionally, catalyzes the transfer of a dimethylallyl group onto the adenine at position 37 in tRNAs that read codons beginning with uridine, leading to the formation of N6-(dimethylallyl)adenosine (i(6)A). In Salmonella typhi, this protein is tRNA dimethylallyltransferase.